The sequence spans 382 residues: Ribosomal RNA large subunit methyltransferase G (382 aa).

Belongs to the methyltransferase superfamily. RlmG family.

It is found in the cytoplasm. The catalysed reaction is guanosine(1835) in 23S rRNA + S-adenosyl-L-methionine = N(2)-methylguanosine(1835) in 23S rRNA + S-adenosyl-L-homocysteine + H(+). In terms of biological role, specifically methylates the guanine in position 1835 (m2G1835) of 23S rRNA. This Psychromonas ingrahamii (strain DSM 17664 / CCUG 51855 / 37) protein is Ribosomal RNA large subunit methyltransferase G.